The chain runs to 379 residues: Queuine tRNA-ribosyltransferase (379 aa).

Asp94 functions as the Proton acceptor in the catalytic mechanism. Residues 94–98, Asp148, Gln191, and Gly218 contribute to the substrate site; that span reads DSGGF. Positions 249-255 are RNA binding; it reads GVGSPDS. The Nucleophile role is filled by Asp268. Positions 273–277 are RNA binding; important for wobble base 34 recognition; that stretch reads TRIAR. Residues Cys306, Cys308, Cys311, and His337 each coordinate Zn(2+).

This sequence belongs to the queuine tRNA-ribosyltransferase family. As to quaternary structure, homodimer. Within each dimer, one monomer is responsible for RNA recognition and catalysis, while the other monomer binds to the replacement base PreQ1. Requires Zn(2+) as cofactor.

It carries out the reaction 7-aminomethyl-7-carbaguanine + guanosine(34) in tRNA = 7-aminomethyl-7-carbaguanosine(34) in tRNA + guanine. Its pathway is tRNA modification; tRNA-queuosine biosynthesis. Functionally, catalyzes the base-exchange of a guanine (G) residue with the queuine precursor 7-aminomethyl-7-deazaguanine (PreQ1) at position 34 (anticodon wobble position) in tRNAs with GU(N) anticodons (tRNA-Asp, -Asn, -His and -Tyr). Catalysis occurs through a double-displacement mechanism. The nucleophile active site attacks the C1' of nucleotide 34 to detach the guanine base from the RNA, forming a covalent enzyme-RNA intermediate. The proton acceptor active site deprotonates the incoming PreQ1, allowing a nucleophilic attack on the C1' of the ribose to form the product. After dissociation, two additional enzymatic reactions on the tRNA convert PreQ1 to queuine (Q), resulting in the hypermodified nucleoside queuosine (7-(((4,5-cis-dihydroxy-2-cyclopenten-1-yl)amino)methyl)-7-deazaguanosine). This is Queuine tRNA-ribosyltransferase from Bacillus anthracis (strain CDC 684 / NRRL 3495).